We begin with the raw amino-acid sequence, 1010 residues long: MDTSKISARYSKVDLLALRYEGKSRQRPQCSTRLELQTLGFWKINLNTAALTVSSAYSNQNKNRLSPEADNSSLICSNSSSISSRRAMRNRERANNYYQRFVPTDSLLISGEDKDKDALSHGQPYKLNIIDHRSISSSHLMPAFAKRRFVISKGSNSEESNEGINTCASKGKAASSPSRKGSELDTAETCLNFVQPDHDQCMSSSPTFSTSRQERRIGSGRLLPRSDNWDYKNEKTVEASIENEKETSPNGSGSTSSLNQHNQSQHRSRTFSGRLVERVPEVTDRRFQYDSKKSFDRQGINNRRISGKEPFSTQSRSKRGNSYLIHEEPEWFSAGPKSQLETIDLHGFEDLEKNEERSVTEDKNNQIQQLDKNLDAQASKDEASMRNSNDSLNFREVIPSDEKKHTDENVVTSIQNSTDLGHPNKNKPIQMQPSQNPESEFNFDAFLNMHPLDNSVLSNDETGKSDSKGTSRFSRWFRQKEAANNNEFPGFRESHAQEKRGIPSVKDLEAQMIKVDMRTDLINPIAGSLCQTVQMEKPIARDTEAFKKLLQQLGSQARQHHPCNDDCRTINLSNIANHVHLESKLHQKINDGHLQQPELSVNVPTMPTSSHVFLQKRLEIQHLIQRLHCGDVSHDFLEKELDNPSTPAATKDVIATVLNEYSHSKRNPVVTGDPNIFTQQSFLQPQSVHQHYSQELHSQNTANHTINQLISHGNSPTPLAFTPTSVLRKMTADKDTQSPSTYCQNPQYHVHQQNAKQVGTRENVLEPQLTATMAVQPRMILGGGNFAIGQNNQHLSPNMSQSRNQQVLKWTSGNMQMVHGKTFGRPILKGGLNSMPHSNSALPFTAHKIEMQPIHQPHLQQQQHRFKAVQSVESNLNTESVHQNITSPVGWHQLYMQHQQQHHHTRQQLSQRVIYGEMHRQSNPQMSPPVPGFSDSSDSGNVIKANSLTSPSYQRDERISSPTNQLAQWFSPELLAKASAGKLPLLNVNQALSLEEFERSIQHSSGVVHN.

The YXXXXLphi motif signature appears at 10–16 (YSKVDLL). Disordered regions lie at residues 154 to 182 (GSNS…RKGS), 196 to 277 (PDHD…RLVE), 289 to 320 (YDSK…SKRG), 354 to 391 (NEER…SNDS), and 921 to 960 (QSNP…ERIS). The span at 201-211 (CMSSSPTFSTS) shows a compositional bias: polar residues. Positions 227–247 (DNWDYKNEKTVEASIENEKET) are enriched in basic and acidic residues. A compositionally biased stretch (polar residues) spans 248 to 263 (SPNGSGSTSSLNQHNQ). 2 stretches are compositionally biased toward basic and acidic residues: residues 354–364 (NEERSVTEDKN) and 372–384 (KNLD…DEAS). Positions 934–953 (SDSSDSGNVIKANSLTSPSY) are enriched in polar residues.

Belongs to the 4E-T/EIF4E-T family. In terms of assembly, interacts (via YXXXXLphi motif) with eIF4E1. Interacts with DDX6/me31B. In terms of tissue distribution, expressed in all larval and adult organs and tissues, with highest levels in the ovary.

Its subcellular location is the cytoplasm. It is found in the P-body. It localises to the nucleus. In terms of biological role, eIF4E1-binding protein that regulates translation and stability of mRNAs in processing bodies (P-bodies). Probably plays a role in P-bodies to coordinate the storage of translationally inactive mRNAs in the cytoplasm and prevent their degradation. Acts as a binding platform for multiple RNA-binding proteins. Required for the formation of P-bodies. The protein is Eukaryotic translation initiation factor 4E transporter of Drosophila melanogaster (Fruit fly).